Consider the following 294-residue polypeptide: Acetylglutamate kinase (294 aa).

Residues 63–64 (GG), arginine 85, and asparagine 188 contribute to the substrate site.

Belongs to the acetylglutamate kinase family. ArgB subfamily.

It localises to the cytoplasm. The enzyme catalyses N-acetyl-L-glutamate + ATP = N-acetyl-L-glutamyl 5-phosphate + ADP. The protein operates within amino-acid biosynthesis; L-arginine biosynthesis; N(2)-acetyl-L-ornithine from L-glutamate: step 2/4. In terms of biological role, catalyzes the ATP-dependent phosphorylation of N-acetyl-L-glutamate. The sequence is that of Acetylglutamate kinase from Methanococcus maripaludis (strain C6 / ATCC BAA-1332).